Here is a 202-residue protein sequence, read N- to C-terminus: Peptide deformylase (202 aa).

Fe cation contacts are provided by cysteine 121 and histidine 163. Glutamate 164 is an active-site residue. Histidine 167 serves as a coordination point for Fe cation.

The protein belongs to the polypeptide deformylase family. It depends on Fe(2+) as a cofactor.

It catalyses the reaction N-terminal N-formyl-L-methionyl-[peptide] + H2O = N-terminal L-methionyl-[peptide] + formate. Its function is as follows. Removes the formyl group from the N-terminal Met of newly synthesized proteins. Requires at least a dipeptide for an efficient rate of reaction. N-terminal L-methionine is a prerequisite for activity but the enzyme has broad specificity at other positions. This Synechococcus sp. (strain CC9311) protein is Peptide deformylase.